We begin with the raw amino-acid sequence, 459 residues long: Glycosyl hydrolase family 109 protein (459 aa).

Positions 1–31 (MHNIHRRNFLKAAGAATAGLVTANIALSAYA) form a signal peptide, tat-type signal. Residues 64-65 (ER), Asp-86, 135-138 (WEWH), 155-156 (EV), and Asn-184 contribute to the NAD(+) site. Substrate is bound by residues Tyr-213, Arg-232, 244–247 (YPTH), and Tyr-326. Position 244 (Tyr-244) interacts with NAD(+).

The protein belongs to the Gfo/Idh/MocA family. Glycosyl hydrolase 109 subfamily. The cofactor is NAD(+). Post-translationally, predicted to be exported by the Tat system. The position of the signal peptide cleavage has not been experimentally proven.

Functionally, glycosidase. The chain is Glycosyl hydrolase family 109 protein from Shewanella baltica (strain OS185).